The primary structure comprises 957 residues: Isoleucine--tRNA ligase (957 aa).

Positions 57–67 match the 'HIGH' region motif; it reads PYANGDIHIGH. L-isoleucyl-5'-AMP is bound at residue E594. The 'KMSKS' region motif lies at 635 to 639; that stretch reads KMSKS. K638 is an ATP binding site. Residues C920, C923, C940, and C943 each contribute to the Zn(2+) site.

Belongs to the class-I aminoacyl-tRNA synthetase family. IleS type 1 subfamily. Monomer. It depends on Zn(2+) as a cofactor.

The protein resides in the cytoplasm. The catalysed reaction is tRNA(Ile) + L-isoleucine + ATP = L-isoleucyl-tRNA(Ile) + AMP + diphosphate. Its function is as follows. Catalyzes the attachment of isoleucine to tRNA(Ile). As IleRS can inadvertently accommodate and process structurally similar amino acids such as valine, to avoid such errors it has two additional distinct tRNA(Ile)-dependent editing activities. One activity is designated as 'pretransfer' editing and involves the hydrolysis of activated Val-AMP. The other activity is designated 'posttransfer' editing and involves deacylation of mischarged Val-tRNA(Ile). This Laribacter hongkongensis (strain HLHK9) protein is Isoleucine--tRNA ligase.